We begin with the raw amino-acid sequence, 339 residues long: tRNA(Ile)-lysidine synthase (339 aa).

Residue 34-39 (SGGPDS) participates in ATP binding.

This sequence belongs to the tRNA(Ile)-lysidine synthase family.

The protein localises to the cytoplasm. It catalyses the reaction cytidine(34) in tRNA(Ile2) + L-lysine + ATP = lysidine(34) in tRNA(Ile2) + AMP + diphosphate + H(+). Its function is as follows. Ligates lysine onto the cytidine present at position 34 of the AUA codon-specific tRNA(Ile) that contains the anticodon CAU, in an ATP-dependent manner. Cytidine is converted to lysidine, thus changing the amino acid specificity of the tRNA from methionine to isoleucine. In Methylobacterium nodulans (strain LMG 21967 / CNCM I-2342 / ORS 2060), this protein is tRNA(Ile)-lysidine synthase.